The chain runs to 131 residues: UPF0102 protein YraN (131 aa).

Polar residues predominate over residues 1 to 19 (MATVPTRSGSPRQLTTKQT). Residues 1-21 (MATVPTRSGSPRQLTTKQTGD) are disordered.

It belongs to the UPF0102 family.

This is UPF0102 protein YraN from Escherichia coli O45:K1 (strain S88 / ExPEC).